Reading from the N-terminus, the 104-residue chain is L-rhamnose mutarotase (104 aa).

Position 18 (tyrosine 18) interacts with substrate. The active-site Proton donor is histidine 22. Substrate contacts are provided by residues tyrosine 41 and 76-77 (WW).

This sequence belongs to the rhamnose mutarotase family. In terms of assembly, homodimer.

It is found in the cytoplasm. The catalysed reaction is alpha-L-rhamnose = beta-L-rhamnose. The protein operates within carbohydrate metabolism; L-rhamnose metabolism. Involved in the anomeric conversion of L-rhamnose. The polypeptide is L-rhamnose mutarotase (Shigella dysenteriae serotype 1 (strain Sd197)).